The following is a 105-amino-acid chain: Large ribosomal subunit protein eL36 (105 aa).

Lys62 carries the post-translational modification N6-acetyllysine.

This sequence belongs to the eukaryotic ribosomal protein eL36 family. As to quaternary structure, component of the large ribosomal subunit.

The protein localises to the cytoplasm. The protein resides in the cytosol. Component of the large ribosomal subunit. The ribosome is a large ribonucleoprotein complex responsible for the synthesis of proteins in the cell. The protein is Large ribosomal subunit protein eL36 (RPL36) of Homo sapiens (Human).